A 271-amino-acid polypeptide reads, in one-letter code: MGQLLKKPKTKVLKQGVTLVHDTEAEKAPLKYVSFKLVDIQANAIYEETLGSYECCIVVVRGTVTVTDGEHVFSNIGTRSSVFERKPTDSVYLSNGRSFTVTGTSEACIALCYAPSNKQLPTKLIKASDVGIENRGQLQNKRLVHNILPDSDKTANSLLVVEVFTESGNWSSYPPHKHDEDNLPYESFLEETYYHEIDPPQGFVFQRVYTESRNIDETMAVENGDVVIVPAGYHPVGVPDGYASYYLNVMAGPVRIWKFRNEKDHEWILSR.

The protein belongs to the isomerase IolB family.

It catalyses the reaction 5-deoxy-D-glucuronate = 5-dehydro-2-deoxy-D-gluconate. It functions in the pathway polyol metabolism; myo-inositol degradation into acetyl-CoA; acetyl-CoA from myo-inositol: step 4/7. In terms of biological role, involved in the isomerization of 5-deoxy-glucuronate (5DG) to 5-dehydro-2-deoxy-D-gluconate (DKG or 2-deoxy-5-keto-D-gluconate). This chain is 5-deoxy-glucuronate isomerase, found in Shouchella clausii (strain KSM-K16) (Alkalihalobacillus clausii).